A 236-amino-acid chain; its full sequence is MSVLFEYPPLVRGILRRRYKRFFAEVELEDGQLVTAHCPNTGPMRAISTLGSPVYLSRSPDPARKLAYTWEMIDLDGTWVGVNTALPNRIVYRALVERVIAEVGTYRTIRREVPYGSENSRIDFLLTGEGEPLYLEVKSTTLNQGTLALFPDTVTTRGQKHLRELIRLCEHGTRAAMLYFINRGDCTAFSPGDSLDPLYGQLLRAGIERGLLVLPCRFEITPQSVRYLGTASILLA.

The protein belongs to the SfsA family.

The protein is Sugar fermentation stimulation protein homolog of Gloeobacter violaceus (strain ATCC 29082 / PCC 7421).